Here is a 559-residue protein sequence, read N- to C-terminus: Protein NRT1/ PTR FAMILY 2.8 (559 aa).

Transmembrane regions (helical) follow at residues 57–77, 92–112, 132–152, 178–198, 206–226, 321–341, 374–394, 404–424, 437–457, 481–501, and 529–549; these read GVFLVNVINIWFGSCNILTLA, LLLGSIASFIGMGIFALTAAL, KWQLGVLFSGLGLLAIGAGGV, FFNWWYFSFTVALVIALTGVV, WVIGFVIPTACLALSITTFVI, LKCVTAILPVWVTGIACFILT, VSMITLAIWISLYECVIIPIV, LTLKHRIEIVMGIICMIVAGF, GSFVSPVSIVMLLPQFALAGL, VAGAIFFLSSSIASYICTLLI, and YFFIIAGIQVANLLYFRLFAS.

The protein belongs to the major facilitator superfamily. Proton-dependent oligopeptide transporter (POT/PTR) (TC 2.A.17) family. Expressed in flowers.

Its subcellular location is the membrane. In Arabidopsis thaliana (Mouse-ear cress), this protein is Protein NRT1/ PTR FAMILY 2.8 (NPF2.8).